We begin with the raw amino-acid sequence, 502 residues long: Cyanidin 3-O-glucoside 5-O-glucosyltransferase (acyl-glucose) (502 aa).

The signal sequence occupies residues 1 to 30; sequence MNMSCKFEIVLLVSWWLLLVLVFGVESSMF. N-linked (GlcNAc...) asparagine glycosylation occurs at N2. Residues Q52, H150, and 196-197 each bind a beta-D-glucoside; that span reads NE. The active-site Proton donor is the E197. N303 carries an N-linked (GlcNAc...) asparagine glycan. A beta-D-glucoside is bound by residues Y320 and E388. The active-site Nucleophile is E388. N425 carries N-linked (GlcNAc...) asparagine glycosylation. Residues W435 and F451 each contribute to the a beta-D-glucoside site.

This sequence belongs to the glycosyl hydrolase 1 family. In terms of tissue distribution, expressed in petals.

Its subcellular location is the vacuole. It carries out the reaction cyanidin 3-O-beta-D-glucoside + 1-O-(trans-sinapoyl)-beta-D-glucose = cyanidin 3,5-di-O-beta-D-glucoside + (E)-sinapate. It functions in the pathway pigment biosynthesis; anthocyanin biosynthesis. Its function is as follows. Beta-glycosidase that catalyzes the transfer of glucose moiety to anthocyanidin 3-glucoside at the 5 position. Anthocyanins are ubiquitous colored pigments that are responsible for variations in petal color. Uses acyl-glucoses, but not UDP-glucose, as the glucose donor. This chain is Cyanidin 3-O-glucoside 5-O-glucosyltransferase (acyl-glucose) (AA5GT), found in Dianthus caryophyllus (Carnation).